Reading from the N-terminus, the 295-residue chain is Ribosomal protein L11 methyltransferase (295 aa).

The S-adenosyl-L-methionine site is built by Thr-150, Gly-171, Asp-193, and Asn-232.

This sequence belongs to the methyltransferase superfamily. PrmA family.

The protein localises to the cytoplasm. It catalyses the reaction L-lysyl-[protein] + 3 S-adenosyl-L-methionine = N(6),N(6),N(6)-trimethyl-L-lysyl-[protein] + 3 S-adenosyl-L-homocysteine + 3 H(+). In terms of biological role, methylates ribosomal protein L11. The protein is Ribosomal protein L11 methyltransferase of Neisseria meningitidis serogroup C / serotype 2a (strain ATCC 700532 / DSM 15464 / FAM18).